A 206-amino-acid polypeptide reads, in one-letter code: Small ribosomal subunit protein uS4 (206 aa).

One can recognise an S4 RNA-binding domain in the interval 96 to 156 (GRLDNVVYRM…EKSKNQLRIQ (61 aa)).

Belongs to the universal ribosomal protein uS4 family. Part of the 30S ribosomal subunit. Contacts protein S5. The interaction surface between S4 and S5 is involved in control of translational fidelity.

One of the primary rRNA binding proteins, it binds directly to 16S rRNA where it nucleates assembly of the body of the 30S subunit. In terms of biological role, with S5 and S12 plays an important role in translational accuracy. The sequence is that of Small ribosomal subunit protein uS4 from Saccharophagus degradans (strain 2-40 / ATCC 43961 / DSM 17024).